The following is a 220-amino-acid chain: Ribonuclease HII (220 aa).

Positions 32-220 (KHIAGIDEAG…FAPIKGRFDC (189 aa)) constitute an RNase H type-2 domain. Residues Asp-38, Glu-39, and Asp-130 each coordinate a divalent metal cation.

It belongs to the RNase HII family. Mn(2+) serves as cofactor. Requires Mg(2+) as cofactor.

It is found in the cytoplasm. The catalysed reaction is Endonucleolytic cleavage to 5'-phosphomonoester.. Functionally, endonuclease that specifically degrades the RNA of RNA-DNA hybrids. This Brucella suis (strain ATCC 23445 / NCTC 10510) protein is Ribonuclease HII.